Here is a 253-residue protein sequence, read N- to C-terminus: Major prion protein (253 aa).

The first 22 residues, 1 to 22, serve as a signal peptide directing secretion; the sequence is MANLGCWMLVLFVATWSDLGLC. The interaction with ADGRG6 stretch occupies residues 23-38; it reads KKRPKPGGWNTGGSRY. An interaction with GRB2, ERI3 and SYN1 region spans residues 23-230; sequence KKRPKPGGWN…ESQAYYQRGS (208 aa). The tract at residues 26-108 is disordered; it reads PKPGGWNTGG…WNKPSKPKTS (83 aa). 5 tandem repeats follow at residues 51–59, 60–67, 68–75, 76–83, and 84–91. The 5 X 8 AA tandem repeats of P-H-G-G-G-W-G-Q stretch occupies residues 51 to 91; sequence PQGGGGWGQPHGGGWGQPHGGGWGQPHGGGWGQPHGGGWGQ. Residues 52-95 are compositionally biased toward gly residues; it reads QGGGGWGQPHGGGWGQPHGGGWGQPHGGGWGQPHGGGWGQGGGT. 12 residues coordinate Cu(2+): H61, G62, G63, H69, G70, G71, H77, G78, G79, H85, G86, and G87. C179 and C214 are oxidised to a cystine. N-linked (GlcNAc...) asparagine glycosylation is found at N181 and N197. A lipid anchor (GPI-anchor amidated serine) is attached at S230. A propeptide spans 231 to 253 (removed in mature form); the sequence is SMVLFSSPPVILLISFLIFLIVG.

Belongs to the prion family. As to quaternary structure, monomer and homodimer. Has a tendency to aggregate into amyloid fibrils containing a cross-beta spine, formed by a steric zipper of superposed beta-strands. Soluble oligomers may represent an intermediate stage on the path to fibril formation. Copper binding may promote oligomerization. Interacts with GRB2, APP, ERI3/PRNPIP and SYN1. Mislocalized cytosolically exposed PrP interacts with MGRN1; this interaction alters MGRN1 subcellular location and causes lysosomal enlargement. Interacts with APP. Interacts with KIAA1191. Interacts with ADGRG6.

The protein resides in the cell membrane. Its subcellular location is the golgi apparatus. Its primary physiological function is unclear. May play a role in neuronal development and synaptic plasticity. May be required for neuronal myelin sheath maintenance. May promote myelin homeostasis through acting as an agonist for ADGRG6 receptor. May play a role in iron uptake and iron homeostasis. Soluble oligomers are toxic to cultured neuroblastoma cells and induce apoptosis (in vitro). Association with GPC1 (via its heparan sulfate chains) targets PRNP to lipid rafts. Also provides Cu(2+) or Zn(2+) for the ascorbate-mediated GPC1 deaminase degradation of its heparan sulfate side chains. The sequence is that of Major prion protein (PRNP) from Colobus guereza (Mantled guereza).